The sequence spans 874 residues: Alanine--tRNA ligase (874 aa).

His-564, His-568, Cys-665, and His-669 together coordinate Zn(2+).

The protein belongs to the class-II aminoacyl-tRNA synthetase family. It depends on Zn(2+) as a cofactor.

Its subcellular location is the cytoplasm. The enzyme catalyses tRNA(Ala) + L-alanine + ATP = L-alanyl-tRNA(Ala) + AMP + diphosphate. Its function is as follows. Catalyzes the attachment of alanine to tRNA(Ala) in a two-step reaction: alanine is first activated by ATP to form Ala-AMP and then transferred to the acceptor end of tRNA(Ala). Also edits incorrectly charged Ser-tRNA(Ala) and Gly-tRNA(Ala) via its editing domain. This is Alanine--tRNA ligase from Polaromonas naphthalenivorans (strain CJ2).